The primary structure comprises 905 residues: Chitin synthase 3B (905 aa).

Residues 1–10 (MAYNGRDQEY) are compositionally biased toward basic and acidic residues. A disordered region spans residues 1–136 (MAYNGRDQEY…GGGGGLGRSK (136 aa)). Over residues 81–93 (GPTGYGDTGGSFG) the composition is skewed to gly residues. Asn-536 carries an N-linked (GlcNAc...) asparagine glycan. Residues 562–584 (MFFLHIQLIYTTLNTMFAWFSLG) form a helical membrane-spanning segment. N-linked (GlcNAc...) asparagine glycosylation occurs at Asn-601. A run of 6 helical transmembrane segments spans residues 618-638 (IVNA…FILA), 653-673 (SFMV…YLVV), 705-725 (VILV…FMYL), 733-753 (SFPY…VYAF), 832-852 (TGLV…ITST), and 873-893 (FLLY…LWFL).

It belongs to the chitin synthase family. Class III subfamily.

Its subcellular location is the cell membrane. The enzyme catalyses [(1-&gt;4)-N-acetyl-beta-D-glucosaminyl](n) + UDP-N-acetyl-alpha-D-glucosamine = [(1-&gt;4)-N-acetyl-beta-D-glucosaminyl](n+1) + UDP + H(+). In terms of biological role, polymerizes chitin, a structural polymer of the cell wall and septum, by transferring the sugar moiety of UDP-GlcNAc to the non-reducing end of the growing chitin polymer. Plays essential functions in fungal survival and host infection. This is Chitin synthase 3B from Gibberella zeae (strain ATCC MYA-4620 / CBS 123657 / FGSC 9075 / NRRL 31084 / PH-1) (Wheat head blight fungus).